Consider the following 272-residue polypeptide: Bis(5'-nucleosyl)-tetraphosphatase, symmetrical (272 aa).

This sequence belongs to the Ap4A hydrolase family.

The enzyme catalyses P(1),P(4)-bis(5'-adenosyl) tetraphosphate + H2O = 2 ADP + 2 H(+). In terms of biological role, hydrolyzes diadenosine 5',5'''-P1,P4-tetraphosphate to yield ADP. The sequence is that of Bis(5'-nucleosyl)-tetraphosphatase, symmetrical from Wigglesworthia glossinidia brevipalpis.